A 299-amino-acid polypeptide reads, in one-letter code: Apolipoprotein E (299 aa).

A signal peptide spans 1–18; it reads MKVLWAVLVVTLLAGCRA. 7 consecutive repeat copies span residues 74-95, 96-117, 118-139, 140-161, 162-183, 184-205, and 224-245. The 8 X 22 AA approximate tandem repeats stretch occupies residues 74-245; sequence LLMEDTMKEV…RLDVVREQME (172 aa). Met137 is modified (methionine sulfoxide). The residue at position 141 (Ser141) is a Phosphoserine. The LDL and other lipoprotein receptors binding stretch occupies residues 152–162; it reads HLRKMRKRLLR. 156–159 is a binding site for heparin; it reads MRKR. The segment at 204-273 is lipid-binding and lipoprotein association; it reads SALTSQPLRE…GWFEPMVEDM (70 aa). 219–226 contacts heparin; sequence GERLRGRL. The specificity for association with VLDL stretch occupies residues 261–273; sequence RLKGWFEPMVEDM.

The protein belongs to the apolipoprotein A1/A4/E family. As to quaternary structure, homotetramer. May interact with ABCA1; functionally associated with ABCA1 in the biogenesis of HDLs. May interact with APP/A4 amyloid-beta peptide; the interaction is extremely stable in vitro but its physiological significance is unclear. May interact with MAPT. May interact with MAP2. In the cerebrospinal fluid, interacts with secreted SORL1. Interacts with PMEL; this allows the loading of PMEL luminal fragment on ILVs to induce fibril nucleation. Post-translationally, APOE exists as multiple glycosylated and sialylated glycoforms within cells and in plasma. The extent of glycosylation and sialylation are tissue and context specific. In terms of processing, glycated in plasma VLDL. Phosphorylated by FAM20C in the extracellular medium.

It is found in the secreted. Its subcellular location is the extracellular space. The protein localises to the extracellular matrix. It localises to the extracellular vesicle. The protein resides in the endosome. It is found in the multivesicular body. Functionally, APOE is an apolipoprotein, a protein associating with lipid particles, that mainly functions in lipoprotein-mediated lipid transport between organs via the plasma and interstitial fluids. APOE is a core component of plasma lipoproteins and is involved in their production, conversion and clearance. Apolipoproteins are amphipathic molecules that interact both with lipids of the lipoprotein particle core and the aqueous environment of the plasma. As such, APOE associates with chylomicrons, chylomicron remnants, very low density lipoproteins (VLDL) and intermediate density lipoproteins (IDL) but shows a preferential binding to high-density lipoproteins (HDL). It also binds a wide range of cellular receptors including the LDL receptor/LDLR, the LDL receptor-related proteins LRP1, LRP2 and LRP8 and the very low-density lipoprotein receptor/VLDLR that mediate the cellular uptake of the APOE-containing lipoprotein particles. Finally, APOE also has a heparin-binding activity and binds heparan-sulfate proteoglycans on the surface of cells, a property that supports the capture and the receptor-mediated uptake of APOE-containing lipoproteins by cells. A main function of APOE is to mediate lipoprotein clearance through the uptake of chylomicrons, VLDLs, and HDLs by hepatocytes. APOE is also involved in the biosynthesis by the liver of VLDLs as well as their uptake by peripheral tissues ensuring the delivery of triglycerides and energy storage in muscle, heart and adipose tissues. By participating in the lipoprotein-mediated distribution of lipids among tissues, APOE plays a critical role in plasma and tissues lipid homeostasis. APOE is also involved in two steps of reverse cholesterol transport, the HDLs-mediated transport of cholesterol from peripheral tissues to the liver, and thereby plays an important role in cholesterol homeostasis. First, it is functionally associated with ABCA1 in the biogenesis of HDLs in tissues. Second, it is enriched in circulating HDLs and mediates their uptake by hepatocytes. APOE also plays an important role in lipid transport in the central nervous system, regulating neuron survival and sprouting. This chain is Apolipoprotein E (APOE), found in Erethizon dorsatum (North American porcupine).